The chain runs to 394 residues: NAD(P)H-quinone oxidoreductase subunit H (394 aa).

It belongs to the complex I 49 kDa subunit family. NDH-1 can be composed of about 15 different subunits; different subcomplexes with different compositions have been identified which probably have different functions.

Its subcellular location is the cellular thylakoid membrane. The enzyme catalyses a plastoquinone + NADH + (n+1) H(+)(in) = a plastoquinol + NAD(+) + n H(+)(out). The catalysed reaction is a plastoquinone + NADPH + (n+1) H(+)(in) = a plastoquinol + NADP(+) + n H(+)(out). Its function is as follows. NDH-1 shuttles electrons from an unknown electron donor, via FMN and iron-sulfur (Fe-S) centers, to quinones in the respiratory and/or the photosynthetic chain. The immediate electron acceptor for the enzyme in this species is believed to be plastoquinone. Couples the redox reaction to proton translocation, and thus conserves the redox energy in a proton gradient. Cyanobacterial NDH-1 also plays a role in inorganic carbon-concentration. The chain is NAD(P)H-quinone oxidoreductase subunit H from Trichormus variabilis (strain ATCC 29413 / PCC 7937) (Anabaena variabilis).